The following is a 185-amino-acid chain: dCTP deaminase, dUMP-forming (185 aa).

DCTP-binding positions include 99–104 (KSSIAR), aspartate 117, 125–127 (TLE), glutamine 146, tyrosine 159, lysine 166, and glutamine 170. Residue glutamate 127 is the Proton donor/acceptor of the active site.

It belongs to the dCTP deaminase family. As to quaternary structure, homotrimer.

It catalyses the reaction dCTP + 2 H2O = dUMP + NH4(+) + diphosphate. It functions in the pathway pyrimidine metabolism; dUMP biosynthesis; dUMP from dCTP: step 1/1. In terms of biological role, bifunctional enzyme that catalyzes both the deamination of dCTP to dUTP and the hydrolysis of dUTP to dUMP without releasing the toxic dUTP intermediate. The polypeptide is dCTP deaminase, dUMP-forming (Methanospirillum hungatei JF-1 (strain ATCC 27890 / DSM 864 / NBRC 100397 / JF-1)).